We begin with the raw amino-acid sequence, 429 residues long: Enolase (429 aa).

Glutamine 162 is a binding site for (2R)-2-phosphoglycerate. Glutamate 204 functions as the Proton donor in the catalytic mechanism. Mg(2+)-binding residues include aspartate 241, glutamate 283, and aspartate 310. 4 residues coordinate (2R)-2-phosphoglycerate: lysine 335, arginine 364, serine 365, and lysine 386. Lysine 335 acts as the Proton acceptor in catalysis.

It belongs to the enolase family. The cofactor is Mg(2+).

The protein resides in the cytoplasm. Its subcellular location is the secreted. It is found in the cell surface. The enzyme catalyses (2R)-2-phosphoglycerate = phosphoenolpyruvate + H2O. It participates in carbohydrate degradation; glycolysis; pyruvate from D-glyceraldehyde 3-phosphate: step 4/5. Its function is as follows. Catalyzes the reversible conversion of 2-phosphoglycerate (2-PG) into phosphoenolpyruvate (PEP). It is essential for the degradation of carbohydrates via glycolysis. This chain is Enolase, found in Mycobacterium sp. (strain JLS).